A 524-amino-acid polypeptide reads, in one-letter code: MSLLSLPWLGLRPVATSPWLLLLLVVGSWLLARILAWTYAFYNNCRRLQCFPQPPKRNWFWGHLGLITPTEEGLKNSTQMSATYSQGFTVWLGPIIPFIVLCHPDTIRSITNASAAIAPKDNLFIRFLKPWLGEGILLSGGDKWSRHRRMLTPAFHFNILKSYITIFNKSANIMLDKWQHLASEGSSRLDMFEHISLMTLDSLQKCIFSFDSHCQERPSEYIATILELSALVEKRSQHILQHMDFLYYLSHDGRRFHRACRLVHDFTDAVIRERRRTLPTQGIDDFFKDKAKSKTLDFIDVLLLSKDEDGKALSDEDIRAEADTFMFGGHDTTASGLSWVLYNLARHPEYQERCRQEVQELLKDRDPKEIEWDDLAQLPFLTMCVKESLRLHPPAPFISRCCTQDIVLPDGRVIPKGITCLIDIIGVHHNPTVWPDPEVYDPFRFDPENSKGRSPLAFIPFSAGPRNCIGQAFAMAEMKVVLALMLLHFRFLPDHTEPRRKLELIMRAEGGLWLRVEPLNVSLQ.

A run of 2 helical transmembrane segments spans residues 19–39 (WLLLLLVVGSWLLARILAWTY) and 87–107 (GFTVWLGPIIPFIVLCHPDTI). Residue Cys-468 coordinates heme.

This sequence belongs to the cytochrome P450 family. Heme is required as a cofactor. Expressed in small intestine, liver, colon and heart.

It localises to the endoplasmic reticulum membrane. It is found in the microsome membrane. It carries out the reaction an organic molecule + reduced [NADPH--hemoprotein reductase] + O2 = an alcohol + oxidized [NADPH--hemoprotein reductase] + H2O + H(+). The enzyme catalyses (5Z,8Z,11Z,14Z)-eicosatetraenoate + reduced [NADPH--hemoprotein reductase] + O2 = 18-hydroxy-(5Z,8Z,11Z,14Z)-eicosatetraenoate + oxidized [NADPH--hemoprotein reductase] + H2O + H(+). The catalysed reaction is (7Z,10Z,13Z,16Z,19Z)-docosapentaenoate + reduced [NADPH--hemoprotein reductase] + O2 = 10,11-epoxy-(7Z,13Z,16Z,19Z)-docosatetraenoate + oxidized [NADPH--hemoprotein reductase] + H2O + H(+). It catalyses the reaction (7Z,10Z,13Z,16Z,19Z)-docosapentaenoate + reduced [NADPH--hemoprotein reductase] + O2 = 13,14-epoxy-(7Z,10Z,16Z,19Z)-docosatetraenoate + oxidized [NADPH--hemoprotein reductase] + H2O + H(+). It carries out the reaction (7Z,10Z,13Z,16Z,19Z)-docosapentaenoate + reduced [NADPH--hemoprotein reductase] + O2 = 16,17-epoxy-(7Z,10Z,13Z,19Z)-docosatetraenoate + oxidized [NADPH--hemoprotein reductase] + H2O + H(+). The enzyme catalyses (7Z,10Z,13Z,16Z,19Z)-docosapentaenoate + reduced [NADPH--hemoprotein reductase] + O2 = 19,20-epoxy-(7Z,10Z,13Z,16Z)-docosatetraenoate + oxidized [NADPH--hemoprotein reductase] + H2O + H(+). The catalysed reaction is (4Z,7Z,10Z,13Z,16Z,19Z)-docosahexaenoate + reduced [NADPH--hemoprotein reductase] + O2 = 10,11-epoxy-(4Z,7Z,13Z,16Z,19Z)-docosapentaenoate + oxidized [NADPH--hemoprotein reductase] + H2O + H(+). It catalyses the reaction (4Z,7Z,10Z,13Z,16Z,19Z)-docosahexaenoate + reduced [NADPH--hemoprotein reductase] + O2 = 13,14-epoxy-(4Z,7Z,10Z,16Z,19Z)-docosapentaenoate + oxidized [NADPH--hemoprotein reductase] + H2O + H(+). It carries out the reaction (4Z,7Z,10Z,13Z,16Z,19Z)-docosahexaenoate + reduced [NADPH--hemoprotein reductase] + O2 = 16,17-epoxy-(4Z,7Z,10Z,13Z,19Z)-docosapentaenoate + oxidized [NADPH--hemoprotein reductase] + H2O + H(+). The enzyme catalyses (4Z,7Z,10Z,13Z,16Z,19Z)-docosahexaenoate + reduced [NADPH--hemoprotein reductase] + O2 = 19,20-epoxy-(4Z,7Z,10Z,13Z,16Z)-docosapentaenoate + oxidized [NADPH--hemoprotein reductase] + H2O + H(+). The protein operates within lipid metabolism; arachidonate metabolism. A cytochrome P450 monooxygenase involved in the metabolism of endogenous polyunsaturated fatty acids (PUFAs). Mechanistically, uses molecular oxygen inserting one oxygen atom into a substrate, and reducing the second into a water molecule, with two electrons provided by NADPH via cytochrome P450 reductase (CPR; NADPH-ferrihemoprotein reductase). Catalyzes the hydroxylation of carbon hydrogen bonds, with preference for omega-2 position. Metabolizes (5Z,8Z,11Z,14Z)-eicosatetraenoic acid (arachidonate) toward 18-hydroxy arachidonate. Catalyzes the epoxidation of double bonds of PUFAs such as docosapentaenoic and docosahexaenoic acids. Has low omega-hydroxylase activity toward leukotriene B4 and arachidonate. Involved in the metabolism of xenobiotics. Catalyzes the hydroxylation of the antihistamine drug ebastine. In Homo sapiens (Human), this protein is Cytochrome P450 4F12.